Reading from the N-terminus, the 722-residue chain is MASTSLGASILVSHCSSAPEFQVSGMRLVFGYKAFGCRTSRRGFRVRCESKIQEKELRRCSPFLERLSLPREAALSSNEWKSVPDIWRSSVEKYGDRVAVVDPYHDPPSTFTYRQLEQEILDFVEGLRVVGVKADEKIALFADNSCRWLVADQGIMATGAVNVVRGSRSSVEELLQIYCHSESVALVVDNPEFFNRIAESFSYKAAPKFVILLWGEKSSLVTAGRHTPVYSYNEIKKFGQERRAKFARSNDSGKYEYEYIDPDDIATIMYTSGTTGNPKGVMLTHQNLLHQIRNLSDFVPAEAGERFLSMLPSWHAYERACEYFIFTCGVEQKYTSIRFLKDDLKRYQPHYLISVPLVYETLYSGIQKQISASSPARKFLALTLIKVSLAYTEMKRVYEGLCLTKNQKPPMYIVSLVDWLWARVVAFFLWPLHMLAEKLVHRKIRSSIGITKAGVSGGGSLPMHVDKFFEAIGVNVQNGYGLTETSPVVSARRLRCNVLGSVGHPIKDTEFKIVDHETGTVLPPGSKGIVKVRGPPVMKGYYKNPLATKQVIDDDGWFNTGDMGWITPQHSTGRSRSCGGVIVLEGRAKDTIVLSTGENVEPLEIEEAAMRSNLIQQIVVIGQDQRRLGAIVIPNKEAAEGAAKQKISPVDSEVNELSKETITSMVYEELRKWTSQCSFQVGPVLIVDEPFTIDNGLMTPTMKIRRDKVVDQYKNEIERLYK.

The N-terminal 47 residues, 1 to 47 (MASTSLGASILVSHCSSAPEFQVSGMRLVFGYKAFGCRTSRRGFRVR), are a transit peptide targeting the chloroplast.

This sequence belongs to the ATP-dependent AMP-binding enzyme family.

It localises to the plastid. The protein localises to the chloroplast. Functionally, may be involved in the activation of fatty acids to acyl-carrier-protein. The protein is Probable acyl-activating enzyme 16, chloroplastic (AAE16) of Arabidopsis thaliana (Mouse-ear cress).